The sequence spans 300 residues: Formamidopyrimidine-DNA glycosylase (300 aa).

Residue P2 is the Schiff-base intermediate with DNA of the active site. Residue E3 is the Proton donor of the active site. K60 functions as the Proton donor; for beta-elimination activity in the catalytic mechanism. DNA is bound by residues H108, R136, and R181. An FPG-type zinc finger spans residues 266 to 300; it reads WVYSRAGQPCRICNTPLEKIKLAGRSTHFCPQCQK. R290 functions as the Proton donor; for delta-elimination activity in the catalytic mechanism.

This sequence belongs to the FPG family. As to quaternary structure, monomer. The cofactor is Zn(2+).

It catalyses the reaction Hydrolysis of DNA containing ring-opened 7-methylguanine residues, releasing 2,6-diamino-4-hydroxy-5-(N-methyl)formamidopyrimidine.. The enzyme catalyses 2'-deoxyribonucleotide-(2'-deoxyribose 5'-phosphate)-2'-deoxyribonucleotide-DNA = a 3'-end 2'-deoxyribonucleotide-(2,3-dehydro-2,3-deoxyribose 5'-phosphate)-DNA + a 5'-end 5'-phospho-2'-deoxyribonucleoside-DNA + H(+). Functionally, involved in base excision repair of DNA damaged by oxidation or by mutagenic agents. Acts as a DNA glycosylase that recognizes and removes damaged bases. Has a preference for oxidized purines, such as 7,8-dihydro-8-oxoguanine (8-oxoG). Has AP (apurinic/apyrimidinic) lyase activity and introduces nicks in the DNA strand. Cleaves the DNA backbone by beta-delta elimination to generate a single-strand break at the site of the removed base with both 3'- and 5'-phosphates. The chain is Formamidopyrimidine-DNA glycosylase from Trichodesmium erythraeum (strain IMS101).